The following is a 381-amino-acid chain: Magnesium transporter MRS2-I (381 aa).

2 helical membrane-spanning segments follow: residues 316–336 and 353–373; these read LFLS…GIFG and WVVL…VAYA. Residues 336 to 338 carry the Required for magnesium transport activity motif; the sequence is GMN.

Belongs to the CorA metal ion transporter (MIT) (TC 1.A.35.5) family.

Its subcellular location is the membrane. Its function is as follows. Magnesium transporter that may mediate the influx of magnesium. The polypeptide is Magnesium transporter MRS2-I (MRS2-I) (Oryza sativa subsp. indica (Rice)).